A 512-amino-acid polypeptide reads, in one-letter code: MVALRFFFFSSLLILLILSQALIMSVGSASQIRLSSTFSIQEATIEDIRVAFNEKRLTSKQLVELYLEAISKLNPILHAVIETNPDALIQAEIADRERDLKNTTKLPILHGVPVLLKDSISTKDKLNTTAGSFALLGSVVARDAGVVKRLRESGAVILGKASLSEWAHFRSFSIPDGWSARGLQGKNPYVLSANPSGSSSGSAISVTANLVAVSLGTETDGSILSPASQNSVVGIKPSVGLTSRAGVVPISLRQDSIGPICRTVSDAVHLLDAIVGYDPLDEATKTASEFIPEGGYKQFLTTSGLKGKRLGIVMKHSSLLDHHIKTLRREGAIVINNLTIPNIEVIVGGTDSGEEIALLAEFKMSLNAYLKELVKSPVRSLADVIAYNEEFAEQEKVKEWGQEVFLTAEATSGMGEKEKTALQKMKELSRNGIEKLIEENKLDAIVTLGSDLSSVLAIGGYPGINVPAGYDSGGVPYGISFGGLRFSEPKLIEIAFAFEQATLIRKPPKFIA.

Active-site charge relay system residues include Lys117 and Ser198. Ser222 functions as the Acyl-ester intermediate in the catalytic mechanism.

The protein belongs to the amidase family. Expressed in vasculature of roots, cotyledons, leaves and sepals.

It catalyses the reaction a monocarboxylic acid amide + H2O = a monocarboxylate + NH4(+). This Arabidopsis thaliana (Mouse-ear cress) protein is Probable amidase At4g34880.